A 332-amino-acid polypeptide reads, in one-letter code: Glycerol-3-phosphate dehydrogenase [NAD(P)+] (332 aa).

5 residues coordinate NADPH: S11, W12, R32, R33, and K106. Positions 106 and 136 each coordinate sn-glycerol 3-phosphate. Position 140 (A140) interacts with NADPH. The sn-glycerol 3-phosphate site is built by K191, D244, S254, R255, and N256. K191 functions as the Proton acceptor in the catalytic mechanism. R255 lines the NADPH pocket. NADPH is bound by residues V280 and E282.

This sequence belongs to the NAD-dependent glycerol-3-phosphate dehydrogenase family.

The protein resides in the cytoplasm. The catalysed reaction is sn-glycerol 3-phosphate + NAD(+) = dihydroxyacetone phosphate + NADH + H(+). The enzyme catalyses sn-glycerol 3-phosphate + NADP(+) = dihydroxyacetone phosphate + NADPH + H(+). It functions in the pathway membrane lipid metabolism; glycerophospholipid metabolism. Its function is as follows. Catalyzes the reduction of the glycolytic intermediate dihydroxyacetone phosphate (DHAP) to sn-glycerol 3-phosphate (G3P), the key precursor for phospholipid synthesis. The polypeptide is Glycerol-3-phosphate dehydrogenase [NAD(P)+] (Corynebacterium jeikeium (strain K411)).